The following is a 901-amino-acid chain: HTH-type transcriptional regulator MalT (901 aa).

ATP is bound at residue 39 to 46 (SPAGYGKT). Residues 829–894 (ELIRTSPLTQ…DAVQHAQQLL (66 aa)) enclose the HTH luxR-type domain. The segment at residues 853-872 (NEQIAGELAVAATTIKTHIR) is a DNA-binding region (H-T-H motif).

Belongs to the MalT family. Monomer in solution. Oligomerizes to an active state in the presence of the positive effectors ATP and maltotriose.

With respect to regulation, activated by ATP and maltotriose, which are both required for DNA binding. Positively regulates the transcription of the maltose regulon whose gene products are responsible for uptake and catabolism of malto-oligosaccharides. Specifically binds to the promoter region of its target genes, recognizing a short DNA motif called the MalT box. The polypeptide is HTH-type transcriptional regulator MalT (Salmonella typhi).